A 352-amino-acid polypeptide reads, in one-letter code: Glycerol-1-phosphate dehydrogenase [NAD(P)+] (352 aa).

Residues 98 to 102 and 120 to 123 each bind NAD(+); these read GKAID and TAAS. Substrate is bound at residue D125. S129 contributes to the NAD(+) binding site. Residue D172 coordinates substrate. Residues D172 and H252 each coordinate Zn(2+). Residue H256 participates in substrate binding. A Zn(2+)-binding site is contributed by H268.

Belongs to the glycerol-1-phosphate dehydrogenase family. The cofactor is Zn(2+).

It is found in the cytoplasm. The enzyme catalyses sn-glycerol 1-phosphate + NAD(+) = dihydroxyacetone phosphate + NADH + H(+). It catalyses the reaction sn-glycerol 1-phosphate + NADP(+) = dihydroxyacetone phosphate + NADPH + H(+). Its pathway is membrane lipid metabolism; glycerophospholipid metabolism. Catalyzes the NAD(P)H-dependent reduction of dihydroxyacetonephosphate (DHAP or glycerone phosphate) to glycerol 1-phosphate (G1P). The G1P thus generated is used as the glycerophosphate backbone of phospholipids in the cellular membranes of Archaea. This is Glycerol-1-phosphate dehydrogenase [NAD(P)+] from Haloarcula marismortui (strain ATCC 43049 / DSM 3752 / JCM 8966 / VKM B-1809) (Halobacterium marismortui).